A 292-amino-acid polypeptide reads, in one-letter code: Ribosomal RNA small subunit methyltransferase I (292 aa).

Belongs to the methyltransferase superfamily. RsmI family.

Its subcellular location is the cytoplasm. The enzyme catalyses cytidine(1402) in 16S rRNA + S-adenosyl-L-methionine = 2'-O-methylcytidine(1402) in 16S rRNA + S-adenosyl-L-homocysteine + H(+). In terms of biological role, catalyzes the 2'-O-methylation of the ribose of cytidine 1402 (C1402) in 16S rRNA. The polypeptide is Ribosomal RNA small subunit methyltransferase I (Bacillus subtilis (strain 168)).